A 134-amino-acid polypeptide reads, in one-letter code: Small ribosomal subunit protein uS8c (134 aa).

It belongs to the universal ribosomal protein uS8 family. In terms of assembly, part of the 30S ribosomal subunit.

The protein localises to the plastid. It is found in the chloroplast. Functionally, one of the primary rRNA binding proteins, it binds directly to 16S rRNA central domain where it helps coordinate assembly of the platform of the 30S subunit. The polypeptide is Small ribosomal subunit protein uS8c (rps8) (Eucalyptus globulus subsp. globulus (Tasmanian blue gum)).